The following is a 498-amino-acid chain: MNKSNPAGSVTGSDIIDAKIEEHQLCGSKKCPSCGHKLEGKPQDWVGLPAGVKFDPTDQELIEHLEAKVLAKDFKSHPLIDEFIPTIEGEDGICYTHPEKLPGVTRDGLSRHFFHRPSKAYTTGTRKRRKIQTECDNNLQGSSSSGETRWHKTGKTRPVMVNGKQKGCKKILVLYTNFGKNRKPEKTNWVMHQYHLGTHEEEKEGELVVSKIFYQTQPRQCNWSSSTSSLNAIGGGGGEASSGGGGGEYHMRRDSGTTSGGSCSSSREIINVNPPNRSDEIGGVGGGVMAVAAAAAAVAAGLPSYAMDQLSFVPFMKSFDEVARRETPQTGHATCEDVMAEQHRHRHQPSSSTSHHMAHDHHHHHHQQQQQRHHAFNISQPTHPISTIISPSTSLHHASINILDDNPYHVHRILLPNENYQTQQQLRQEGEEEHNDGKMGGRSASGLEELIMGCTSSTTHHDVKDGSSSMGNQQEAEWLKYSTFWPAPDSSDNQDHHG.

Residues 48–215 enclose the NAC domain; sequence LPAGVKFDPT…ELVVSKIFYQ (168 aa). A DNA-binding region spans residues 166 to 221; sequence KGCKKILVLYTNFGKNRKPEKTNWVMHQYHLGTHEEEKEGELVVSKIFYQTQPRQC. Disordered regions lie at residues 225 to 278, 338 to 374, 423 to 443, and 457 to 498; these read SSTS…PNRS, VMAE…QRHH, QQQL…GGRS, and STTH…DHHG. The span at 233–248 shows a compositional bias: gly residues; it reads IGGGGGEASSGGGGGE. Positions 256–266 are enriched in low complexity; it reads GTTSGGSCSSS. Basic residues predominate over residues 356 to 374; the sequence is HMAHDHHHHHHQQQQQRHH. Residues 466–475 show a composition bias toward polar residues; that stretch reads GSSSMGNQQE.

In terms of tissue distribution, expressed in the vascular cylinder of roots. Expressed in the differentiation zone of the root stele.

It is found in the nucleus. Its function is as follows. Transcription activator involved in xylem formation. Promotes the expression of the secondary wall-associated transcription factor MYB46. Functions upstream of NAC030/VND7, a master switch of xylem vessel differentiation. Acts as a upstream regulator of NAC101/VND6 and LBD30/ASL19. The sequence is that of NAC domain-containing protein 75 from Arabidopsis thaliana (Mouse-ear cress).